The primary structure comprises 196 residues: Peptide methionine sulfoxide reductase MsrA 2 (196 aa).

Residue Cys36 is part of the active site.

It belongs to the MsrA Met sulfoxide reductase family.

It carries out the reaction L-methionyl-[protein] + [thioredoxin]-disulfide + H2O = L-methionyl-(S)-S-oxide-[protein] + [thioredoxin]-dithiol. The enzyme catalyses [thioredoxin]-disulfide + L-methionine + H2O = L-methionine (S)-S-oxide + [thioredoxin]-dithiol. Its function is as follows. Has an important function as a repair enzyme for proteins that have been inactivated by oxidation. Catalyzes the reversible oxidation-reduction of methionine sulfoxide in proteins to methionine. The chain is Peptide methionine sulfoxide reductase MsrA 2 (msrA2) from Caulobacter vibrioides (strain ATCC 19089 / CIP 103742 / CB 15) (Caulobacter crescentus).